The chain runs to 95 residues: Large ribosomal subunit protein uL23cz/uL23cy (95 aa).

Belongs to the universal ribosomal protein uL23 family. As to quaternary structure, part of the 50S ribosomal subunit.

The protein localises to the plastid. It localises to the chloroplast. Its function is as follows. Binds to 23S rRNA. This chain is Large ribosomal subunit protein uL23cz/uL23cy (rpl23-A), found in Amborella trichopoda.